The following is a 595-amino-acid chain: Alpha-1,3-galactosidase B (595 aa).

The N-terminal stretch at 1–22 (MKTILLFALSLLLSLSVSDVCA) is a signal peptide. PbH1 repeat units follow at residues 432–454 (TPEV…LFST), 455–477 (PKKT…LLCG), and 488–541 (CRDV…VIED).

Belongs to the glycosyl hydrolase 110 family. B subfamily.

It catalyses the reaction Hydrolysis of terminal, non-reducing branched (1-&gt;3)-alpha-D-galactosidic residues, producing free D-galactose.. The enzyme catalyses Hydrolysis of terminal, non-reducing linear (1-&gt;3)-alpha-D-galactosidic residues, producing free D-galactose.. The catalysed reaction is Hydrolysis of terminal, non-reducing alpha-D-galactose residues in alpha-D-galactosides, including galactose oligosaccharides, galactomannans and galactolipids.. Its function is as follows. Alpha-galactosidase. Removes both branched alpha-1,3-linked galactose residues of blood group B antigens and linear alpha-1,3-linked galactose structures. The polypeptide is Alpha-1,3-galactosidase B (glaB) (Bacteroides fragilis (strain YCH46)).